Here is a 424-residue protein sequence, read N- to C-terminus: Serine--tRNA ligase (424 aa).

233 to 235 (TAE) provides a ligand contact to L-serine. ATP is bound by residues 264-266 (RRE) and valine 280. An L-serine-binding site is contributed by glutamate 287. 351–354 (EISS) is a binding site for ATP. Serine 386 is a binding site for L-serine.

Belongs to the class-II aminoacyl-tRNA synthetase family. Type-1 seryl-tRNA synthetase subfamily. Homodimer. The tRNA molecule binds across the dimer.

Its subcellular location is the cytoplasm. It carries out the reaction tRNA(Ser) + L-serine + ATP = L-seryl-tRNA(Ser) + AMP + diphosphate + H(+). The catalysed reaction is tRNA(Sec) + L-serine + ATP = L-seryl-tRNA(Sec) + AMP + diphosphate + H(+). The protein operates within aminoacyl-tRNA biosynthesis; selenocysteinyl-tRNA(Sec) biosynthesis; L-seryl-tRNA(Sec) from L-serine and tRNA(Sec): step 1/1. Catalyzes the attachment of serine to tRNA(Ser). Is also able to aminoacylate tRNA(Sec) with serine, to form the misacylated tRNA L-seryl-tRNA(Sec), which will be further converted into selenocysteinyl-tRNA(Sec). The polypeptide is Serine--tRNA ligase (Kosmotoga olearia (strain ATCC BAA-1733 / DSM 21960 / TBF 19.5.1)).